The primary structure comprises 176 residues: NAD(P)H-quinone oxidoreductase subunit J (176 aa).

This sequence belongs to the complex I 30 kDa subunit family. As to quaternary structure, NDH-1 can be composed of about 15 different subunits; different subcomplexes with different compositions have been identified which probably have different functions.

It is found in the cellular thylakoid membrane. It catalyses the reaction a plastoquinone + NADH + (n+1) H(+)(in) = a plastoquinol + NAD(+) + n H(+)(out). The enzyme catalyses a plastoquinone + NADPH + (n+1) H(+)(in) = a plastoquinol + NADP(+) + n H(+)(out). Functionally, NDH-1 shuttles electrons from an unknown electron donor, via FMN and iron-sulfur (Fe-S) centers, to quinones in the respiratory and/or the photosynthetic chain. The immediate electron acceptor for the enzyme in this species is believed to be plastoquinone. Couples the redox reaction to proton translocation, and thus conserves the redox energy in a proton gradient. Cyanobacterial NDH-1 also plays a role in inorganic carbon-concentration. In Nostoc punctiforme (strain ATCC 29133 / PCC 73102), this protein is NAD(P)H-quinone oxidoreductase subunit J.